The sequence spans 147 residues: Ribosome maturation factor RimP (147 aa).

The protein belongs to the RimP family.

It is found in the cytoplasm. Its function is as follows. Required for maturation of 30S ribosomal subunits. The sequence is that of Ribosome maturation factor RimP from Thermosipho melanesiensis (strain DSM 12029 / CIP 104789 / BI429).